The sequence spans 150 residues: Small ribosomal subunit protein uS11x (150 aa).

It belongs to the universal ribosomal protein uS11 family.

The protein resides in the cytoplasm. The chain is Small ribosomal subunit protein uS11x (RPS14C) from Arabidopsis thaliana (Mouse-ear cress).